The sequence spans 425 residues: Polyribonucleotide 5'-hydroxyl-kinase Clp1 (425 aa).

ATP-binding positions include glutamate 22, lysine 62, and 124–129 (DVGKST).

This sequence belongs to the Clp1 family. Clp1 subfamily. In terms of assembly, component of the tRNA splicing endonuclease complex. Component of pre-mRNA cleavage complex II (CF-II).

The protein resides in the nucleus. The catalysed reaction is a 5'-end dephospho-2'-deoxyribonucleoside-DNA + ATP = a 5'-end 5'-phospho-2'-deoxyribonucleoside-DNA + ADP + H(+). It carries out the reaction a 5'-end dephospho-ribonucleoside-RNA + ATP = a 5'-end 5'-phospho-ribonucleoside-RNA + ADP + H(+). Functionally, polynucleotide kinase that can phosphorylate the 5'-hydroxyl groups of double-stranded RNA (dsRNA), single-stranded RNA (ssRNA), double stranded DNA (dsDNA) and double-stranded DNA:RNA hybrids. dsRNA is phosphorylated more efficiently than dsDNA, and the RNA component of a DNA:RNA hybrid is phosphorylated more efficiently than the DNA component. Plays a role in both tRNA splicing and mRNA 3'-end formation. Component of the tRNA splicing endonuclease complex: phosphorylates the 5'-terminus of the tRNA 3'-exon during tRNA splicing; this phosphorylation event is a prerequisite for the subsequent ligation of the two exon halves and the production of a mature tRNA. Its role in tRNA splicing and maturation is required for cerebellar development. Component of the pre-mRNA cleavage complex II (CF-II), which seems to be required for mRNA 3'-end formation. Also phosphorylates the 5'-terminus of exogenously introduced short interfering RNAs (siRNAs), which is a necessary prerequisite for their incorporation into the RNA-induced silencing complex (RISC). However, endogenous siRNAs and microRNAs (miRNAs) that are produced by the cleavage of dsRNA precursors by dicer1 already contain a 5'-phosphate group, so this protein may be dispensible for normal RNA-mediated gene silencing. This chain is Polyribonucleotide 5'-hydroxyl-kinase Clp1, found in Gallus gallus (Chicken).